We begin with the raw amino-acid sequence, 169 residues long: MSDHKRAVLAGGCFWGMQDLIRKQPGVVSTRVGYTGGQNDHPTYRNHPGHAEAIEIVYDPAQTDYRALLEFFFQIHDPTTKNRQGNDIGTSYRSEIFYVDEEQRQIALDTIADVDASGLWPGKVVTEVSPAPDFWEAEPEHQDYLERYPTGYTCHFPRPGWKLPKRAEV.

Cys-13 is an active-site residue.

Belongs to the MsrA Met sulfoxide reductase family.

It catalyses the reaction L-methionyl-[protein] + [thioredoxin]-disulfide + H2O = L-methionyl-(S)-S-oxide-[protein] + [thioredoxin]-dithiol. It carries out the reaction [thioredoxin]-disulfide + L-methionine + H2O = L-methionine (S)-S-oxide + [thioredoxin]-dithiol. In terms of biological role, has an important function as a repair enzyme for proteins that have been inactivated by oxidation. Catalyzes the reversible oxidation-reduction of methionine sulfoxide in proteins to methionine. In Mycolicibacterium gilvum (strain PYR-GCK) (Mycobacterium gilvum (strain PYR-GCK)), this protein is Peptide methionine sulfoxide reductase MsrA.